A 96-amino-acid chain; its full sequence is Integration host factor subunit beta (96 aa).

The tract at residues 59–78 (RVGRNPKTGETVSLPGKYVP) is disordered.

The protein belongs to the bacterial histone-like protein family. As to quaternary structure, heterodimer of an alpha and a beta chain.

This protein is one of the two subunits of integration host factor, a specific DNA-binding protein that functions in genetic recombination as well as in transcriptional and translational control. This Thioalkalivibrio sulfidiphilus (strain HL-EbGR7) protein is Integration host factor subunit beta.